The following is an 89-amino-acid chain: Phosphocarrier protein HPr (89 aa).

Residues 1–88 (MLEHELTVTN…ELFENRFNED (88 aa)) enclose the HPr domain. His15 serves as the catalytic Pros-phosphohistidine intermediate. At Ser46 the chain carries Phosphoserine; by HPrK/P.

It belongs to the HPr family.

The protein localises to the cytoplasm. With respect to regulation, phosphorylation on Ser-46 inhibits the phosphoryl transfer from enzyme I to HPr. General (non sugar-specific) component of the phosphoenolpyruvate-dependent sugar phosphotransferase system (sugar PTS). This major carbohydrate active-transport system catalyzes the phosphorylation of incoming sugar substrates concomitantly with their translocation across the cell membrane. The phosphoryl group from phosphoenolpyruvate (PEP) is transferred to the phosphoryl carrier protein HPr by enzyme I. Phospho-HPr then transfers it to the PTS EIIA domain. The polypeptide is Phosphocarrier protein HPr (ptsH) (Xylella fastidiosa (strain Temecula1 / ATCC 700964)).